A 208-amino-acid polypeptide reads, in one-letter code: Component of Sp100-rs (208 aa).

The HSR domain occupies 6-121; it reads GSPRMSTEQE…LRRSFECGAK (116 aa).

The sequence is that of Component of Sp100-rs (Csprs) from Mus musculus (Mouse).